A 361-amino-acid polypeptide reads, in one-letter code: Alanine racemase (361 aa).

The active-site Proton acceptor; specific for D-alanine is the lysine 34. Lysine 34 carries the N6-(pyridoxal phosphate)lysine modification. Substrate is bound at residue arginine 129. Catalysis depends on tyrosine 256, which acts as the Proton acceptor; specific for L-alanine. Methionine 304 provides a ligand contact to substrate.

The protein belongs to the alanine racemase family. Homodimer. Pyridoxal 5'-phosphate serves as cofactor.

It catalyses the reaction L-alanine = D-alanine. It functions in the pathway amino-acid biosynthesis; D-alanine biosynthesis; D-alanine from L-alanine: step 1/1. In terms of biological role, catalyzes the interconversion of L-alanine and D-alanine. May also act on other amino acids. The chain is Alanine racemase (alr) from Corynebacterium glutamicum (strain ATCC 13032 / DSM 20300 / JCM 1318 / BCRC 11384 / CCUG 27702 / LMG 3730 / NBRC 12168 / NCIMB 10025 / NRRL B-2784 / 534).